The primary structure comprises 1199 residues: DNA-directed RNA polymerase subunit beta (1199 aa).

The segment at 1175–1199 (EEKKAHEAAAQATDGKSANSTDDKK) is disordered. Residues 1188–1199 (DGKSANSTDDKK) are compositionally biased toward polar residues.

Belongs to the RNA polymerase beta chain family. As to quaternary structure, the RNAP catalytic core consists of 2 alpha, 1 beta, 1 beta' and 1 omega subunit. When a sigma factor is associated with the core the holoenzyme is formed, which can initiate transcription.

The catalysed reaction is RNA(n) + a ribonucleoside 5'-triphosphate = RNA(n+1) + diphosphate. Its function is as follows. DNA-dependent RNA polymerase catalyzes the transcription of DNA into RNA using the four ribonucleoside triphosphates as substrates. This Lacticaseibacillus paracasei (strain ATCC 334 / BCRC 17002 / CCUG 31169 / CIP 107868 / KCTC 3260 / NRRL B-441) (Lactobacillus paracasei) protein is DNA-directed RNA polymerase subunit beta.